The chain runs to 305 residues: DNA-directed RNA polymerase 35 kDa subunit (305 aa).

Belongs to the poxviridae DNA-directed RNA polymerase 35 kDa subunit family. In terms of assembly, the DNA-dependent RNA polymerase used for intermediate and late genes expression consists of eight subunits 147 kDa, 133 kDa, 35 kDa, 30 kDa, 22 kDa, 19 kDa, 18 kDa and 7 kDa totalling more than 500 kDa in mass. The same holoenzyme, with the addition of the transcription-specificity factor RAP94, is used for early gene expression.

Its subcellular location is the virion. It catalyses the reaction RNA(n) + a ribonucleoside 5'-triphosphate = RNA(n+1) + diphosphate. In terms of biological role, part of the DNA-dependent RNA polymerase which catalyzes the transcription of viral DNA into RNA using the four ribonucleoside triphosphates as substrates. Responsible for the transcription of early, intermediate and late genes. DNA-dependent RNA polymerase associates with the early transcription factor (ETF), itself composed of D6 and A7, thereby allowing the early genes transcription. Late transcription, and probably also intermediate transcription, require newly synthesized RNA polymerase. This chain is DNA-directed RNA polymerase 35 kDa subunit (OPG156), found in Homo sapiens (Human).